A 233-amino-acid chain; its full sequence is tRNA (guanine-N(7)-)-methyltransferase (233 aa).

4 residues coordinate S-adenosyl-L-methionine: glutamate 62, glutamate 87, aspartate 116, and aspartate 138. Aspartate 138 is a catalytic residue. Substrate-binding positions include lysine 142, aspartate 174, and 212–215; that span reads TRYE.

This sequence belongs to the class I-like SAM-binding methyltransferase superfamily. TrmB family.

It catalyses the reaction guanosine(46) in tRNA + S-adenosyl-L-methionine = N(7)-methylguanosine(46) in tRNA + S-adenosyl-L-homocysteine. It participates in tRNA modification; N(7)-methylguanine-tRNA biosynthesis. Catalyzes the formation of N(7)-methylguanine at position 46 (m7G46) in tRNA. This is tRNA (guanine-N(7)-)-methyltransferase from Bartonella henselae (strain ATCC 49882 / DSM 28221 / CCUG 30454 / Houston 1) (Rochalimaea henselae).